The primary structure comprises 476 residues: MGCSAATFILVALFGSSSWMGTNSVWMQLPLLTSELPEQWNLPSYLAGVVQIACIVPLIYTILHKGVKSFTIPTAPLIIALLSLACCCQLGLSFFWSDYSEIFGAPRSWPLYSLLFGLAIVNAMSNVLFMPFMAQFHPAYLNAYFVGMGLSSLAPSLLSLAQGTSMFKCDEKGVAERFPPNFSVSIFFFVIFSFTCVALFAFIALYRSGAHTHFATPNKKEPNEGTPLKKDLNNTSSSRKGDDEDESPIEIHETGAPAIDAIVSELDVTFREELQKSFRDANYLERSAMINDDSEPHPVDYITGVKFTFLLFTTALVNAQMNGIITSVQSYAALPYSQATYHFAVTLSNVVSPLSSFLPFFISVRSIPVLAILTACSTAMTAFIVYLAALSPNLIFNSVTIGSALSIGGSLIAAGLHSYLRVVFASLLREGHQSESRLFWCGVFIQIGSFIGSAVMFPLVNIAHLFTSAPQCKSIS.

A helical transmembrane segment spans residues 1–21 (MGCSAATFILVALFGSSSWMG). The Cytoplasmic portion of the chain corresponds to 22–41 (TNSVWMQLPLLTSELPEQWN). A helical transmembrane segment spans residues 42–62 (LPSYLAGVVQIACIVPLIYTI). The Extracellular portion of the chain corresponds to 63-75 (LHKGVKSFTIPTA). A helical membrane pass occupies residues 76–96 (PLIIALLSLACCCQLGLSFFW). Residues 97–113 (SDYSEIFGAPRSWPLYS) lie on the Cytoplasmic side of the membrane. The chain crosses the membrane as a helical span at residues 114 to 134 (LLFGLAIVNAMSNVLFMPFMA). The Extracellular portion of the chain corresponds to 135 to 140 (QFHPAY). The chain crosses the membrane as a helical span at residues 141 to 161 (LNAYFVGMGLSSLAPSLLSLA). At 162 to 185 (QGTSMFKCDEKGVAERFPPNFSVS) the chain is on the cytoplasmic side. A helical membrane pass occupies residues 186–206 (IFFFVIFSFTCVALFAFIALY). Residues 207–306 (RSGAHTHFAT…HPVDYITGVK (100 aa)) are Extracellular-facing. The segment at 215–249 (ATPNKKEPNEGTPLKKDLNNTSSSRKGDDEDESPI) is disordered. The span at 218–232 (NKKEPNEGTPLKKDL) shows a compositional bias: basic and acidic residues. A glycan (N-linked (GlcNAc...) asparagine) is linked at asparagine 233. A helical transmembrane segment spans residues 307 to 327 (FTFLLFTTALVNAQMNGIITS). The Cytoplasmic segment spans residues 328–342 (VQSYAALPYSQATYH). The chain crosses the membrane as a helical span at residues 343-363 (FAVTLSNVVSPLSSFLPFFIS). Residues 364 to 366 (VRS) are Extracellular-facing. Residues 367-387 (IPVLAILTACSTAMTAFIVYL) form a helical membrane-spanning segment. Topologically, residues 388–393 (AALSPN) are cytoplasmic. The helical transmembrane segment at 394–414 (LIFNSVTIGSALSIGGSLIAA) threads the bilayer. The Extracellular portion of the chain corresponds to 415 to 437 (GLHSYLRVVFASLLREGHQSESR). Residues 438–458 (LFWCGVFIQIGSFIGSAVMFP) traverse the membrane as a helical segment. Residues 459-476 (LVNIAHLFTSAPQCKSIS) lie on the Cytoplasmic side of the membrane.

Belongs to the riboflavin transporter family. Expressed in intestine and pharynx.

It is found in the cell membrane. It catalyses the reaction riboflavin(in) = riboflavin(out). Functionally, riboflavin transporter. This chain is Riboflavin transporter rft-2, found in Caenorhabditis elegans.